The chain runs to 226 residues: Phosphoribosylformylglycinamidine synthase subunit PurQ (226 aa).

A Glutamine amidotransferase type-1 domain is found at 2 to 226; it reads KIAVVVFPGS…LENGRIKVEA (225 aa). The active-site Nucleophile is the cysteine 86. Residues histidine 195 and glutamate 197 contribute to the active site.

As to quaternary structure, part of the FGAM synthase complex composed of 1 PurL, 1 PurQ and 2 PurS subunits.

The protein resides in the cytoplasm. It catalyses the reaction N(2)-formyl-N(1)-(5-phospho-beta-D-ribosyl)glycinamide + L-glutamine + ATP + H2O = 2-formamido-N(1)-(5-O-phospho-beta-D-ribosyl)acetamidine + L-glutamate + ADP + phosphate + H(+). The enzyme catalyses L-glutamine + H2O = L-glutamate + NH4(+). It functions in the pathway purine metabolism; IMP biosynthesis via de novo pathway; 5-amino-1-(5-phospho-D-ribosyl)imidazole from N(2)-formyl-N(1)-(5-phospho-D-ribosyl)glycinamide: step 1/2. Part of the phosphoribosylformylglycinamidine synthase complex involved in the purines biosynthetic pathway. Catalyzes the ATP-dependent conversion of formylglycinamide ribonucleotide (FGAR) and glutamine to yield formylglycinamidine ribonucleotide (FGAM) and glutamate. The FGAM synthase complex is composed of three subunits. PurQ produces an ammonia molecule by converting glutamine to glutamate. PurL transfers the ammonia molecule to FGAR to form FGAM in an ATP-dependent manner. PurS interacts with PurQ and PurL and is thought to assist in the transfer of the ammonia molecule from PurQ to PurL. In Limosilactobacillus reuteri (strain DSM 20016) (Lactobacillus reuteri), this protein is Phosphoribosylformylglycinamidine synthase subunit PurQ.